We begin with the raw amino-acid sequence, 419 residues long: Tubby-like protein 4 (419 aa).

Residues 1–96 (MAATKREPLR…EREEEEEGSS (96 aa)) are disordered. The segment covering 33–57 (AKEKEKENEVPTEIGRGKDGGEKKP) has biased composition (basic and acidic residues).

Belongs to the TUB family.

This Oryza sativa subsp. japonica (Rice) protein is Tubby-like protein 4 (TULP4).